Reading from the N-terminus, the 243-residue chain is NAD-dependent protein deacylase SIR2rp3 (243 aa).

A Deacetylase sirtuin-type domain is found at 1 to 239 (MKACRCITIL…PTWVDQVLKE (239 aa)). Residue 12–31 (GAGISAESGISTFRDSNGLW) coordinates NAD(+). 2 residues coordinate substrate: Tyr56 and Arg59. An NAD(+)-binding site is contributed by 95–98 (QNVD). The active-site Proton acceptor is the His113. The Zn(2+) site is built by Cys121 and Cys141. Residues 181-183 (GTS) and Ala225 contribute to the NAD(+) site.

It belongs to the sirtuin family. Class III subfamily. Zn(2+) serves as cofactor.

It is found in the mitochondrion. The catalysed reaction is N(6)-malonyl-L-lysyl-[protein] + NAD(+) + H2O = 2''-O-malonyl-ADP-D-ribose + nicotinamide + L-lysyl-[protein]. It catalyses the reaction N(6)-succinyl-L-lysyl-[protein] + NAD(+) + H2O = 2''-O-succinyl-ADP-D-ribose + nicotinamide + L-lysyl-[protein]. It carries out the reaction N(6)-glutaryl-L-lysyl-[protein] + NAD(+) + H2O = 2''-O-glutaryl-ADP-D-ribose + nicotinamide + L-lysyl-[protein]. In terms of biological role, NAD-dependent lysine demalonylase, desuccinylase and deglutarylase that specifically removes malonyl, succinyl and glutaryl groups on target proteins. Has weak NAD-dependent protein deacetylase activity; however this activity may not be physiologically relevant in vivo. The chain is NAD-dependent protein deacylase SIR2rp3 (SIR2rp3) from Leishmania major.